The following is a 346-amino-acid chain: S-adenosylmethionine:tRNA ribosyltransferase-isomerase (346 aa).

Belongs to the QueA family. As to quaternary structure, monomer.

It is found in the cytoplasm. It catalyses the reaction 7-aminomethyl-7-carbaguanosine(34) in tRNA + S-adenosyl-L-methionine = epoxyqueuosine(34) in tRNA + adenine + L-methionine + 2 H(+). It functions in the pathway tRNA modification; tRNA-queuosine biosynthesis. In terms of biological role, transfers and isomerizes the ribose moiety from AdoMet to the 7-aminomethyl group of 7-deazaguanine (preQ1-tRNA) to give epoxyqueuosine (oQ-tRNA). In Borreliella afzelii (strain PKo) (Borrelia afzelii), this protein is S-adenosylmethionine:tRNA ribosyltransferase-isomerase.